The sequence spans 430 residues: UDP-N-acetylglucosamine 1-carboxyvinyltransferase 1 (430 aa).

Phosphoenolpyruvate is bound at residue 22–23 (KN). Residue Arg102 coordinates UDP-N-acetyl-alpha-D-glucosamine. Cys126 serves as the catalytic Proton donor. Cys126 is modified (2-(S-cysteinyl)pyruvic acid O-phosphothioketal). UDP-N-acetyl-alpha-D-glucosamine is bound by residues 131-135 (RPVDL), 172-175 (KVSV), Asp317, and Ile339.

This sequence belongs to the EPSP synthase family. MurA subfamily.

It is found in the cytoplasm. The enzyme catalyses phosphoenolpyruvate + UDP-N-acetyl-alpha-D-glucosamine = UDP-N-acetyl-3-O-(1-carboxyvinyl)-alpha-D-glucosamine + phosphate. The protein operates within cell wall biogenesis; peptidoglycan biosynthesis. In terms of biological role, cell wall formation. Adds enolpyruvyl to UDP-N-acetylglucosamine. The protein is UDP-N-acetylglucosamine 1-carboxyvinyltransferase 1 of Mesorhizobium japonicum (strain LMG 29417 / CECT 9101 / MAFF 303099) (Mesorhizobium loti (strain MAFF 303099)).